The following is a 467-amino-acid chain: Ran-binding protein M homolog (467 aa).

The segment at 1–25 (MNSSPPPANSANGDTTNNGENGQDL) is disordered. The span at 9-25 (NSANGDTTNNGENGQDL) shows a compositional bias: polar residues. One can recognise a B30.2/SPRY domain in the interval 31-219 (DKIRLSAKRD…VLVNFGKKKF (189 aa)). One can recognise a LisH domain in the interval 244-276 (PPNIGYGLVKTYLLHYGYEETLDAFNLATKNTV). The 59-residue stretch at 295–353 (ALKQRKNLRQLVRNGEIDTALAELQKLYPQIVQDDKSVVCFLLHCQKFIELVRVGKLEE) folds into the CTLH domain.

The protein belongs to the RANBP9/10 family. Interacts with WDR36, WDS, GID8, MAEA and RMD5.

The protein localises to the cytoplasm. It is found in the nucleus. It localises to the perinuclear region. The chain is Ran-binding protein M homolog from Arabidopsis thaliana (Mouse-ear cress).